A 471-amino-acid chain; its full sequence is BPI fold-containing family B member 1 (471 aa).

Residues 1 to 18 form the signal peptide; it reads MTNPWIVSLLLGATLVQA. N-linked (GlcNAc...) asparagine glycosylation is found at N150, N157, N260, and N397. The cysteines at positions 154 and 197 are disulfide-linked.

The protein belongs to the BPI/LBP/Plunc superfamily. Plunc family.

It is found in the secreted. Functionally, may play a role in innate immunity in mouth, nose and lungs. Binds bacterial lipopolysaccharide (LPS) and modulates the cellular responses to LPS. The protein is BPI fold-containing family B member 1 (Bpifb1) of Rattus norvegicus (Rat).